The sequence spans 227 residues: ATP synthase F(0) complex subunit a (227 aa).

6 helical membrane passes run 14 to 34, 69 to 89, 98 to 118, 139 to 159, 167 to 187, and 190 to 210; these read LLGH…FPSP, WALM…LGLL, QLSM…LTGL, IPAL…ALGV, AGHL…PILP, and SILT…VAMI.

This sequence belongs to the ATPase A chain family. Component of the ATP synthase complex composed at least of ATP5F1A/subunit alpha, ATP5F1B/subunit beta, ATP5MC1/subunit c (homooctomer), MT-ATP6/subunit a, MT-ATP8/subunit 8, ATP5ME/subunit e, ATP5MF/subunit f, ATP5MG/subunit g, ATP5MK/subunit k, ATP5MJ/subunit j, ATP5F1C/subunit gamma, ATP5F1D/subunit delta, ATP5F1E/subunit epsilon, ATP5PF/subunit F6, ATP5PB/subunit b, ATP5PD/subunit d, ATP5PO/subunit OSCP. ATP synthase complex consists of a soluble F(1) head domain (subunits alpha(3) and beta(3)) - the catalytic core - and a membrane F(0) domain - the membrane proton channel (subunits c, a, 8, e, f, g, k and j). These two domains are linked by a central stalk (subunits gamma, delta, and epsilon) rotating inside the F1 region and a stationary peripheral stalk (subunits F6, b, d, and OSCP). Interacts with DNAJC30; interaction is direct.

The protein localises to the mitochondrion inner membrane. The enzyme catalyses H(+)(in) = H(+)(out). Functionally, subunit a, of the mitochondrial membrane ATP synthase complex (F(1)F(0) ATP synthase or Complex V) that produces ATP from ADP in the presence of a proton gradient across the membrane which is generated by electron transport complexes of the respiratory chain. ATP synthase complex consist of a soluble F(1) head domain - the catalytic core - and a membrane F(1) domain - the membrane proton channel. These two domains are linked by a central stalk rotating inside the F(1) region and a stationary peripheral stalk. During catalysis, ATP synthesis in the catalytic domain of F(1) is coupled via a rotary mechanism of the central stalk subunits to proton translocation. With the subunit c (ATP5MC1), forms the proton-conducting channel in the F(0) domain, that contains two crucial half-channels (inlet and outlet) that facilitate proton movement from the mitochondrial intermembrane space (IMS) into the matrix. Protons are taken up via the inlet half-channel and released through the outlet half-channel, following a Grotthuss mechanism. The sequence is that of ATP synthase F(0) complex subunit a from Anas platyrhynchos (Mallard).